The sequence spans 468 residues: 6-phospho-beta-galactosidase (468 aa).

Gln-19, His-116, Asn-159, Glu-160, and Asn-297 together coordinate D-galactose 6-phosphate. Glu-160 functions as the Proton donor in the catalytic mechanism. The active-site Nucleophile is Glu-375. Ser-428, Trp-429, Lys-435, and Tyr-437 together coordinate D-galactose 6-phosphate.

The protein belongs to the glycosyl hydrolase 1 family.

It carries out the reaction a 6-phospho-beta-D-galactoside + H2O = D-galactose 6-phosphate + an alcohol. It functions in the pathway carbohydrate metabolism; lactose degradation; D-galactose 6-phosphate and beta-D-glucose from lactose 6-phosphate: step 1/1. This is 6-phospho-beta-galactosidase from Streptococcus pyogenes serotype M2 (strain MGAS10270).